Consider the following 697-residue polypeptide: Elongation factor G (697 aa).

The region spanning 8–283 (EHIRNIGICA…AVVDFLPSPT (276 aa)) is the tr-type G domain. GTP-binding positions include 17–24 (AHIDAGKT), 81–85 (DTPGH), and 135–138 (NKMD).

This sequence belongs to the TRAFAC class translation factor GTPase superfamily. Classic translation factor GTPase family. EF-G/EF-2 subfamily.

The protein localises to the cytoplasm. Its function is as follows. Catalyzes the GTP-dependent ribosomal translocation step during translation elongation. During this step, the ribosome changes from the pre-translocational (PRE) to the post-translocational (POST) state as the newly formed A-site-bound peptidyl-tRNA and P-site-bound deacylated tRNA move to the P and E sites, respectively. Catalyzes the coordinated movement of the two tRNA molecules, the mRNA and conformational changes in the ribosome. This is Elongation factor G from Rickettsia rhipicephali.